The primary structure comprises 339 residues: Phenylalanine--tRNA ligase alpha subunit (339 aa).

Position 250 (Glu-250) interacts with Mg(2+).

It belongs to the class-II aminoacyl-tRNA synthetase family. Phe-tRNA synthetase alpha subunit type 1 subfamily. As to quaternary structure, tetramer of two alpha and two beta subunits. The cofactor is Mg(2+).

The protein localises to the cytoplasm. The catalysed reaction is tRNA(Phe) + L-phenylalanine + ATP = L-phenylalanyl-tRNA(Phe) + AMP + diphosphate + H(+). This chain is Phenylalanine--tRNA ligase alpha subunit, found in Flavobacterium johnsoniae (strain ATCC 17061 / DSM 2064 / JCM 8514 / BCRC 14874 / CCUG 350202 / NBRC 14942 / NCIMB 11054 / UW101) (Cytophaga johnsonae).